A 265-amino-acid polypeptide reads, in one-letter code: Glutamate racemase (265 aa).

Residues 12 to 13 (DS) and 44 to 45 (YG) each bind substrate. The Proton donor/acceptor role is filled by Cys-75. 76–77 (NT) serves as a coordination point for substrate. Cys-183 serves as the catalytic Proton donor/acceptor. 184–185 (TH) lines the substrate pocket.

Belongs to the aspartate/glutamate racemases family.

The enzyme catalyses L-glutamate = D-glutamate. It functions in the pathway cell wall biogenesis; peptidoglycan biosynthesis. Provides the (R)-glutamate required for cell wall biosynthesis. The polypeptide is Glutamate racemase (Carboxydothermus hydrogenoformans (strain ATCC BAA-161 / DSM 6008 / Z-2901)).